The sequence spans 507 residues: MDKLQYELQGYLEIDRYRKQRFLYPLLFREYIYALAHDHGLNSSIFYEPTENLGYDNDNKSSSLIVKRLITRLHQQNHLTISVNDSRFVGPNRSFYSQTIPEGFAGIMEIPFSVRLVCSLERERIAKYQNLRSIHSIFPFLEDKLSHLYYVSDILIPYPIHLEILLQTLRTRIRDAPSLHLLRCFLHEHHNWNSLITSNKSISIFSKENQRLFLFLYNSHVYECESVLVFLRKQSSYLRSISSLAFLERTHFYGKIKHLVVTPRNDSQRTLPLWFFKEPLMHYVRYQGKSIMASRCTNLLMXKWKYYLVNFWQCHFHLWSQPGRIHINELSNHSFYFLGYLSGVRLTPWVIRSQMLENSFMIDTAIKRFDTIVPIFPLIGSLVKAKFCNVSGYPISKSVWADSSDSDIIGRFGWICRNLSHYHSGSSKKHSLCRIKYILRLSCARTLARKHKSTVRAICKRLGPKLLEEFLTEEHEIVSFILRRTRLRNERIWYLDIIRINGLVPHS.

It belongs to the intron maturase 2 family. MatK subfamily.

The protein resides in the plastid. It localises to the chloroplast. Functionally, usually encoded in the trnK tRNA gene intron. Probably assists in splicing its own and other chloroplast group II introns. The chain is Maturase K from Euryale ferox (Gorgon plant).